The following is a 391-amino-acid chain: Elongation factor Tu (391 aa).

Residues 10-201 (KPHVNIGTIG…QVDAYIPTPV (192 aa)) enclose the tr-type G domain. Residues 19–26 (GHVDHGKT) are G1. 19 to 26 (GHVDHGKT) is a binding site for GTP. Position 26 (Thr26) interacts with Mg(2+). Residues 55–59 (GITIS) are G2. The interval 76–79 (DCPG) is G3. Residues 76-80 (DCPGH) and 131-134 (NKVD) each bind GTP. Residues 131–134 (NKVD) form a G4 region. Positions 169–171 (SAL) are G5.

This sequence belongs to the TRAFAC class translation factor GTPase superfamily. Classic translation factor GTPase family. EF-Tu/EF-1A subfamily. In terms of assembly, monomer.

The protein resides in the cytoplasm. It catalyses the reaction GTP + H2O = GDP + phosphate + H(+). Functionally, GTP hydrolase that promotes the GTP-dependent binding of aminoacyl-tRNA to the A-site of ribosomes during protein biosynthesis. In Mesorhizobium japonicum (strain LMG 29417 / CECT 9101 / MAFF 303099) (Mesorhizobium loti (strain MAFF 303099)), this protein is Elongation factor Tu.